The following is a 1380-amino-acid chain: DNA-directed RNA polymerase subunit beta (1380 aa).

This sequence belongs to the RNA polymerase beta chain family. As to quaternary structure, the RNAP catalytic core consists of 2 alpha, 1 beta, 1 beta' and 1 omega subunit. When a sigma factor is associated with the core the holoenzyme is formed, which can initiate transcription.

It carries out the reaction RNA(n) + a ribonucleoside 5'-triphosphate = RNA(n+1) + diphosphate. Its function is as follows. DNA-dependent RNA polymerase catalyzes the transcription of DNA into RNA using the four ribonucleoside triphosphates as substrates. The protein is DNA-directed RNA polymerase subunit beta of Rhizobium rhizogenes (strain K84 / ATCC BAA-868) (Agrobacterium radiobacter).